A 641-amino-acid chain; its full sequence is Serine/threonine-protein kinase pink-1, mitochondrial (641 aa).

Residues 1–74 (MSMKRFGKAA…TRHGRVFRPF (74 aa)) constitute a mitochondrion transit peptide. The 347-residue stretch at 137-483 (YEFGEFLGQG…AANALNLSLF (347 aa)) folds into the Protein kinase domain. Residues 143 to 151 (LGQGCNAAV) and Lys199 each bind ATP. The Proton acceptor role is filled by Asp338.

This sequence belongs to the protein kinase superfamily. Ser/Thr protein kinase family. Requires Mg(2+) as cofactor. Post-translationally, autophosphorylated.

The protein localises to the mitochondrion. The catalysed reaction is L-seryl-[protein] + ATP = O-phospho-L-seryl-[protein] + ADP + H(+). It catalyses the reaction L-threonyl-[protein] + ATP = O-phospho-L-threonyl-[protein] + ADP + H(+). Its function is as follows. Protects against mitochondrial dysfunction during cellular stress, potentially by phosphorylating mitochondrial proteins. Plays a role in mitophagy. The protein is Serine/threonine-protein kinase pink-1, mitochondrial (pink-1) of Caenorhabditis elegans.